The chain runs to 855 residues: Potassium transporter 13 (855 aa).

Positions 1 to 67 (MFHVEEESSG…EMDSDEEDDN (67 aa)) are disordered. The Cytoplasmic portion of the chain corresponds to 1 to 105 (MFHVEEESSG…EIEDTGIGKK (105 aa)). Residues 36-51 (EKDDYEVNEDYDDDGY) are compositionally biased toward acidic residues. The chain crosses the membrane as a helical span at residues 106-126 (LILALQTLGVVFGDIGTSPLY). At 127–142 (TFTVMFRRSPINDKED) the chain is on the extracellular side. Residues 143–163 (IIGALSLVIYTLILIPLVKYV) form a helical membrane-spanning segment. The Cytoplasmic portion of the chain corresponds to 164-233 (HFVLWANDDG…RLEASMALKK (70 aa)). Residues 234 to 254 (LLLILVLAGTAMVIADAVVTP) form a helical membrane-spanning segment. The Extracellular segment spans residues 255–268 (AMSVMSAIGGLKVG). A helical membrane pass occupies residues 269 to 289 (VGVIEQDQVVVISVSFLVILF). Residues 290 to 298 (SVQKYGTSK) are Cytoplasmic-facing. A helical membrane pass occupies residues 299-319 (LGLVLGPALLLWFFCLAGIGI). Topologically, residues 320–346 (YNLVKYDSSVFKAFNPAYIYFFFKRNS) are extracellular. Residues 347 to 367 (VNAWYALGGCVLCATGSEAMF) traverse the membrane as a helical segment. Residues 368-379 (ADLSYFSVHSIQ) are Cytoplasmic-facing. A helical membrane pass occupies residues 380 to 400 (LTFILLVLPCLLLGYLGQAAY). The Extracellular segment spans residues 401 to 415 (LSENFSAAGDAFFSS). N-linked (GlcNAc...) asparagine glycosylation is present at asparagine 404. The helical transmembrane segment at 416 to 436 (VPSSLFWPVFLISNVAALIAS) threads the bilayer. Over 437 to 467 (RAMTTATFTCIKQSIALGCFPRLKIIHTSKK) the chain is Cytoplasmic. A helical membrane pass occupies residues 468-488 (FIGQIYIPVLNWSLLVVCLIV). Over 489–503 (VCSTSNIFAIGNAYG) the chain is Extracellular. A helical membrane pass occupies residues 504–524 (IAELGIMMTTTILVTLIMLLI). Residues 525 to 528 (WQTN) are Cytoplasmic-facing. The helical transmembrane segment at 529–549 (IIVVSMFAIVSLIVELVFFSS) threads the bilayer. Over 550–553 (VCSS) the chain is Extracellular. The chain crosses the membrane as a helical span at residues 554-574 (VADGSWIILVFATIMFLIMFV). Residues 575 to 855 (WNYGSKLKYE…LMQVGMTYMV (281 aa)) are Cytoplasmic-facing. The residue at position 766 (serine 766) is a Phosphoserine.

Belongs to the HAK/KUP transporter (TC 2.A.72.3) family.

Its subcellular location is the cell membrane. Probable potassium transporter. In Arabidopsis thaliana (Mouse-ear cress), this protein is Potassium transporter 13 (POT13).